We begin with the raw amino-acid sequence, 863 residues long: DNA mismatch repair protein MutS (863 aa).

607–614 (GPNMAGKS) is an ATP binding site.

Belongs to the DNA mismatch repair MutS family.

In terms of biological role, this protein is involved in the repair of mismatches in DNA. It is possible that it carries out the mismatch recognition step. This protein has a weak ATPase activity. The polypeptide is DNA mismatch repair protein MutS (Caldicellulosiruptor bescii (strain ATCC BAA-1888 / DSM 6725 / KCTC 15123 / Z-1320) (Anaerocellum thermophilum)).